We begin with the raw amino-acid sequence, 451 residues long: Phosphoglucosamine mutase (451 aa).

S101 (phosphoserine intermediate) is an active-site residue. Mg(2+) contacts are provided by S101, D240, D242, and D244. Phosphoserine is present on S101.

This sequence belongs to the phosphohexose mutase family. Requires Mg(2+) as cofactor. Post-translationally, activated by phosphorylation.

It carries out the reaction alpha-D-glucosamine 1-phosphate = D-glucosamine 6-phosphate. Functionally, catalyzes the conversion of glucosamine-6-phosphate to glucosamine-1-phosphate. The sequence is that of Phosphoglucosamine mutase from Streptococcus pyogenes serotype M12 (strain MGAS2096).